The following is a 196-amino-acid chain: dITP/XTP pyrophosphatase (196 aa).

Residue Thr-7–Lys-12 coordinates substrate. Mg(2+) is bound by residues Glu-39 and Asp-68. Residue Asp-68 is the Proton acceptor of the active site. Substrate-binding positions include Ser-69, His-153 to Asp-156, Lys-176, and His-181 to Arg-182.

It belongs to the HAM1 NTPase family. Homodimer. Mg(2+) is required as a cofactor.

It catalyses the reaction XTP + H2O = XMP + diphosphate + H(+). It carries out the reaction dITP + H2O = dIMP + diphosphate + H(+). The catalysed reaction is ITP + H2O = IMP + diphosphate + H(+). Pyrophosphatase that catalyzes the hydrolysis of nucleoside triphosphates to their monophosphate derivatives, with a high preference for the non-canonical purine nucleotides XTP (xanthosine triphosphate), dITP (deoxyinosine triphosphate) and ITP. Seems to function as a house-cleaning enzyme that removes non-canonical purine nucleotides from the nucleotide pool, thus preventing their incorporation into DNA/RNA and avoiding chromosomal lesions. This chain is dITP/XTP pyrophosphatase, found in Thioalkalivibrio sulfidiphilus (strain HL-EbGR7).